The sequence spans 605 residues: Aspartate--tRNA(Asp/Asn) ligase (605 aa).

Glu186 contributes to the L-aspartate binding site. An aspartate region spans residues 210–213 (QQFK). Residues Arg232 and His460 each coordinate L-aspartate. 232–234 (RDE) is an ATP binding site. Glu494 is a binding site for ATP. Arg501 contacts L-aspartate. An ATP-binding site is contributed by 546-549 (GLDR).

It belongs to the class-II aminoacyl-tRNA synthetase family. Type 1 subfamily. In terms of assembly, homodimer.

Its subcellular location is the cytoplasm. It carries out the reaction tRNA(Asx) + L-aspartate + ATP = L-aspartyl-tRNA(Asx) + AMP + diphosphate. Functionally, aspartyl-tRNA synthetase with relaxed tRNA specificity since it is able to aspartylate not only its cognate tRNA(Asp) but also tRNA(Asn). Reaction proceeds in two steps: L-aspartate is first activated by ATP to form Asp-AMP and then transferred to the acceptor end of tRNA(Asp/Asn). The sequence is that of Aspartate--tRNA(Asp/Asn) ligase from Chlorobium chlorochromatii (strain CaD3).